A 159-amino-acid polypeptide reads, in one-letter code: Anaerobic nitrite reductase HB2 (159 aa).

One can recognise a Globin domain in the interval 2 to 152 (GFTEKQEGLV…LAEAIKAEMK (151 aa)). The Homodimerization signature appears at 35 to 39 (EIAPG). Positions 45, 59, 63, and 98 each coordinate heme b. The short motif at 105–117 (DPHFEVVKEALLR) is the Homodimerization element.

The protein belongs to the plant globin family. Homodimer. Heme b is required as a cofactor.

Its subcellular location is the cytoplasm. It localises to the nucleus. The enzyme catalyses Fe(III)-heme b-[protein] + nitric oxide + H2O = Fe(II)-heme b-[protein] + nitrite + 2 H(+). Its function is as follows. Phytoglobin that reduces nitrite to nitric oxide (NO) under anoxic conditions (e.g. during flooding or in waterlogged soil). May not function as an oxygen storage or transport protein. Has an unusually high affinity for O(2) through an hexacoordinate heme iron because of a very low dissociation constant. This chain is Anaerobic nitrite reductase HB2, found in Gossypium hirsutum (Upland cotton).